The following is a 74-amino-acid chain: Cytochrome c oxidase subunit 2 (74 aa).

Topologically, residues 1 to 14 are mitochondrial intermembrane; that stretch reads MAHPSQLGLQDAAS. Residues 15 to 45 traverse the membrane as a helical segment; the sequence is PVMEELLHFHDHALMIVFLISTLVLYIIVAM. Over 46–74 the chain is Mitochondrial matrix; it reads VSTKLTDKYTIDSQEIEIVWTVLPAVILI.

It belongs to the cytochrome c oxidase subunit 2 family. Component of the cytochrome c oxidase (complex IV, CIV), a multisubunit enzyme composed of 14 subunits. The complex is composed of a catalytic core of 3 subunits MT-CO1, MT-CO2 and MT-CO3, encoded in the mitochondrial DNA, and 11 supernumerary subunits COX4I, COX5A, COX5B, COX6A, COX6B, COX6C, COX7A, COX7B, COX7C, COX8 and NDUFA4, which are encoded in the nuclear genome. The complex exists as a monomer or a dimer and forms supercomplexes (SCs) in the inner mitochondrial membrane with NADH-ubiquinone oxidoreductase (complex I, CI) and ubiquinol-cytochrome c oxidoreductase (cytochrome b-c1 complex, complex III, CIII), resulting in different assemblies (supercomplex SCI(1)III(2)IV(1) and megacomplex MCI(2)III(2)IV(2)). Found in a complex with TMEM177, COA6, COX18, COX20, SCO1 and SCO2. Interacts with TMEM177 in a COX20-dependent manner. Interacts with COX20. Interacts with COX16. It depends on Cu cation as a cofactor.

The protein localises to the mitochondrion inner membrane. The catalysed reaction is 4 Fe(II)-[cytochrome c] + O2 + 8 H(+)(in) = 4 Fe(III)-[cytochrome c] + 2 H2O + 4 H(+)(out). Its function is as follows. Component of the cytochrome c oxidase, the last enzyme in the mitochondrial electron transport chain which drives oxidative phosphorylation. The respiratory chain contains 3 multisubunit complexes succinate dehydrogenase (complex II, CII), ubiquinol-cytochrome c oxidoreductase (cytochrome b-c1 complex, complex III, CIII) and cytochrome c oxidase (complex IV, CIV), that cooperate to transfer electrons derived from NADH and succinate to molecular oxygen, creating an electrochemical gradient over the inner membrane that drives transmembrane transport and the ATP synthase. Cytochrome c oxidase is the component of the respiratory chain that catalyzes the reduction of oxygen to water. Electrons originating from reduced cytochrome c in the intermembrane space (IMS) are transferred via the dinuclear copper A center (CU(A)) of subunit 2 and heme A of subunit 1 to the active site in subunit 1, a binuclear center (BNC) formed by heme A3 and copper B (CU(B)). The BNC reduces molecular oxygen to 2 water molecules using 4 electrons from cytochrome c in the IMS and 4 protons from the mitochondrial matrix. The polypeptide is Cytochrome c oxidase subunit 2 (mt-co2) (Megalops atlanticus (Tarpon)).